A 133-amino-acid polypeptide reads, in one-letter code: Glycine cleavage system H protein (133 aa).

A Lipoyl-binding domain is found at 30–112 (TITVGITHHA…YGAGWFFKIK (83 aa)). Lys-71 carries the post-translational modification N6-lipoyllysine.

This sequence belongs to the GcvH family. The glycine cleavage system is composed of four proteins: P, T, L and H. The cofactor is (R)-lipoate.

In terms of biological role, the glycine cleavage system catalyzes the degradation of glycine. The H protein shuttles the methylamine group of glycine from the P protein to the T protein. This is Glycine cleavage system H protein from Neisseria gonorrhoeae (strain ATCC 700825 / FA 1090).